A 394-amino-acid chain; its full sequence is HORMA domain-containing protein 1 (394 aa).

The 203-residue stretch at 24–226 (QQSLVLVKRL…TPFHTFKVKV (203 aa)) folds into the HORMA domain. Residues 306–394 (KESPELSISH…RKFSEPKEHI (89 aa)) form a disordered region. Residues 311-325 (LSISHSQVEQLVSKT) are compositionally biased toward polar residues. Residues 353–362 (KSKESRKRSQ) show a composition bias toward basic and acidic residues. Ser-376 bears the Phosphoserine mark. The short motif at 383–386 (KRRK) is the Nuclear localization signal element.

Interacts with HORMAD2. Interacts with IHO1. Post-translationally, phosphorylated at Ser-377 in a SPO11-dependent manner.

It localises to the nucleus. The protein resides in the chromosome. In terms of biological role, plays a key role in meiotic progression. Regulates 3 different functions during meiosis: ensures that sufficient numbers of processed DNA double-strand breaks (DSBs) are available for successful homology search by increasing the steady-state numbers of single-stranded DSB ends. Promotes synaptonemal-complex formation independently of its role in homology search. Plays a key role in the male mid-pachytene checkpoint and the female meiotic prophase checkpoint: required for efficient build-up of ATR activity on unsynapsed chromosome regions, a process believed to form the basis of meiotic silencing of unsynapsed chromatin (MSUC) and meiotic prophase quality control in both sexes. This Sus scrofa (Pig) protein is HORMA domain-containing protein 1 (HORMAD1).